The primary structure comprises 279 residues: Probable endonuclease 4 (279 aa).

Residues His69, His109, Glu145, Asp179, His182, His216, Asp229, His231, and Glu261 each contribute to the Zn(2+) site.

The protein belongs to the AP endonuclease 2 family. The cofactor is Zn(2+).

The enzyme catalyses Endonucleolytic cleavage to 5'-phosphooligonucleotide end-products.. Its function is as follows. Endonuclease IV plays a role in DNA repair. It cleaves phosphodiester bonds at apurinic or apyrimidinic (AP) sites, generating a 3'-hydroxyl group and a 5'-terminal sugar phosphate. This chain is Probable endonuclease 4, found in Desulforapulum autotrophicum (strain ATCC 43914 / DSM 3382 / VKM B-1955 / HRM2) (Desulfobacterium autotrophicum).